The primary structure comprises 146 residues: Hemoglobin subunit beta (146 aa).

An N-acetylvaline modification is found at valine 1. One can recognise a Globin domain in the interval 2-146 (HLTGEEKSAV…VANALAHKYH (145 aa)). Phosphothreonine is present on threonine 12. Position 44 is a phosphoserine (serine 44). Residue lysine 59 is modified to N6-acetyllysine. Histidine 63 contacts heme b. Lysine 82 is modified (N6-acetyllysine). A heme b-binding site is contributed by histidine 92. Cysteine 93 carries the S-nitrosocysteine modification. Position 144 is an N6-acetyllysine (lysine 144).

The protein belongs to the globin family. In terms of assembly, heterotetramer of two alpha chains and two beta chains. In terms of tissue distribution, red blood cells.

Functionally, involved in oxygen transport from the lung to the various peripheral tissues. This chain is Hemoglobin subunit beta (HBB), found in Nycticebus coucang (Slow loris).